Reading from the N-terminus, the 607-residue chain is Nexilin (607 aa).

Basic and acidic residues predominate over residues 1 to 14 (MNDVSQKAEIKEML). Disordered regions lie at residues 1-143 (MNDV…EDKM) and 165-268 (ETEA…RRRI). Ser16 carries the post-translational modification Phosphoserine. Basic and acidic residues-rich tracts occupy residues 40–85 (GKFD…RAEQ), 120–143 (KTKD…EDKM), 167–221 (EAKK…HMVN), and 228–268 (DRET…RRRI). Position 172 is a phosphoserine (Ser172). 3 positions are modified to phosphoserine: Ser281, Ser288, and Ser296. Thr301 is subject to Phosphothreonine. Disordered stretches follow at residues 419-444 (NFHE…KVNM) and 480-514 (AALQ…GAPW). Phosphoserine occurs at positions 495 and 500. The residue at position 502 (Thr502) is a Phosphothreonine. Positions 513–601 (PWFKKPLRNT…GSAASTCILT (89 aa)) constitute an Ig-like domain.

As to quaternary structure, interacts with F-actin.

It is found in the cytoplasm. The protein resides in the cytoskeleton. It localises to the cell junction. Its subcellular location is the adherens junction. The protein localises to the myofibril. It is found in the sarcomere. The protein resides in the z line. In terms of biological role, involved in regulating cell migration through association with the actin cytoskeleton. Has an essential role in the maintenance of Z line and sarcomere integrity. This chain is Nexilin, found in Mus musculus (Mouse).